Consider the following 172-residue polypeptide: Ribosome maturation factor RimM (172 aa).

The 73-residue stretch at 96–168 folds into the PRC barrel domain; the sequence is DGEFYYHEII…RIEVELMEGL (73 aa).

This sequence belongs to the RimM family. As to quaternary structure, binds ribosomal protein uS19.

The protein localises to the cytoplasm. In terms of biological role, an accessory protein needed during the final step in the assembly of 30S ribosomal subunit, possibly for assembly of the head region. Essential for efficient processing of 16S rRNA. May be needed both before and after RbfA during the maturation of 16S rRNA. It has affinity for free ribosomal 30S subunits but not for 70S ribosomes. In Streptococcus thermophilus (strain CNRZ 1066), this protein is Ribosome maturation factor RimM.